Consider the following 206-residue polypeptide: Twist-related protein 1 (206 aa).

Over residues 1–18 the composition is skewed to low complexity; that stretch reads MMQDVSSSPVSPADDSLS. Positions 1–109 are disordered; the sequence is MMQDVSSSPV…GGGSPQSYEE (109 aa). A compositionally biased stretch (basic residues) spans 34 to 43; that stretch reads RGARKRRSSR. Gly residues-rich tracts occupy residues 48–65 and 78–103; these read GSAG…GGDE and SAGG…GGGS. Positions 112-163 constitute a bHLH domain; it reads TQRVMANVRERQRTQSLNEAFAALRKIIPTLPSDKLSKIQTLKLAARYIDFL. Positions 165–195 are sufficient for transactivation activity; the sequence is QVLQSDELDSKMASCSYVAHERLSYAFSVWR.

In terms of assembly, efficient DNA binding requires dimerization with another bHLH protein. Homodimer or heterodimer with E proteins such as TCF3. ID1 binds preferentially to TCF3 but does not interact efficiently with TWIST1 so ID1 levels control the amount of TCF3 available to dimerize with TWIST1 and thus determine the type of dimer formed. Subset of mesodermal cells.

The protein resides in the nucleus. Functionally, acts as a transcriptional regulator. Inhibits myogenesis by sequestrating E proteins, inhibiting trans-activation by MEF2, and inhibiting DNA-binding by MYOD1 through physical interaction. This interaction probably involves the basic domains of both proteins. Also represses expression of pro-inflammatory cytokines such as TNFA and IL1B. Regulates cranial suture patterning and fusion. Activates transcription as a heterodimer with E proteins. Regulates gene expression differentially, depending on dimer composition. Homodimers induce expression of FGFR2 and POSTN while heterodimers repress FGFR2 and POSTN expression and induce THBS1 expression. Heterodimerization is also required for osteoblast differentiation. Represses the activity of the circadian transcriptional activator: NPAS2-BMAL1 heterodimer. The sequence is that of Twist-related protein 1 (Twist1) from Mus musculus (Mouse).